Here is a 394-residue protein sequence, read N- to C-terminus: Multidrug resistance protein D (394 aa).

Topologically, residues 1–8 (MKRQRNVN) are cytoplasmic. The helical transmembrane segment at 9–29 (LLLMLVLLVAVGQMAQTIYIP) threads the bilayer. The Periplasmic portion of the chain corresponds to 30-46 (AIADMARDLNVREGAVQ). The helical transmembrane segment at 47–67 (SVMGAYLLTYGVSQLFYGPIS) threads the bilayer. Over 68–73 (DRVGRR) the chain is Cytoplasmic. A helical membrane pass occupies residues 74 to 94 (PVILVGMSIFMLATLVAVTTS). Residue serine 95 is a topological domain, periplasmic. The helical transmembrane segment at 96-116 (LTVLIAASAMQGMGTGVGGVM) threads the bilayer. The Cytoplasmic portion of the chain corresponds to 117-134 (ARTLPRDLYERTQLRHAN). Residues 135 to 155 (SLLNMGILVSPLLAPLIGGLL) traverse the membrane as a helical segment. The Periplasmic segment spans residues 156 to 162 (DTMWNWR). The chain crosses the membrane as a helical span at residues 163 to 183 (ACYLFLLVLCAGVTFSMARWM). Topologically, residues 184–212 (PETRPVDAPRTRLLTSYKTLFGNSGFNCY) are cytoplasmic. A helical transmembrane segment spans residues 213–233 (LLMLIGGLAGIAAFEACSGVL). The Periplasmic portion of the chain corresponds to 234–242 (MGAVLGLSS). The helical transmembrane segment at 243–263 (MTVSILFILPIPAAFFGAWFA) threads the bilayer. Over 264–276 (GRPNKRFSTLMWQ) the chain is Cytoplasmic. Residues 277-297 (SVICCLLAGLLMWIPDWFGVM) form a helical membrane-spanning segment. Residue asparagine 298 is a topological domain, periplasmic. Residues 299-319 (VWTLLVPAALFFFGAGMLFPL) traverse the membrane as a helical segment. At 320 to 329 (ATSGAMEPFP) the chain is on the cytoplasmic side. Residues 330–350 (FLAGTAGALVGGLQNIGSGVL) traverse the membrane as a helical segment. Topologically, residues 351–364 (ASLSAMLPQTGQGS) are periplasmic. Residues 365 to 385 (LGLLMTLMGLLIVLCWLPLAT) form a helical membrane-spanning segment. At 386–394 (RMSHQGQPV) the chain is on the cytoplasmic side.

The protein belongs to the major facilitator superfamily.

The protein resides in the cell inner membrane. In terms of biological role, multidrug resistance pump that participates in a low energy shock adaptive response. This is Multidrug resistance protein D (emrD) from Escherichia coli (strain K12).